A 159-amino-acid polypeptide reads, in one-letter code: Ribosomal RNA large subunit methyltransferase H (159 aa).

Residues Leu76, Gly108, and 127–132 (FSKMTF) each bind S-adenosyl-L-methionine.

The protein belongs to the RNA methyltransferase RlmH family. In terms of assembly, homodimer.

Its subcellular location is the cytoplasm. The enzyme catalyses pseudouridine(1915) in 23S rRNA + S-adenosyl-L-methionine = N(3)-methylpseudouridine(1915) in 23S rRNA + S-adenosyl-L-homocysteine + H(+). Functionally, specifically methylates the pseudouridine at position 1915 (m3Psi1915) in 23S rRNA. This is Ribosomal RNA large subunit methyltransferase H from Clostridium botulinum (strain Okra / Type B1).